Reading from the N-terminus, the 287-residue chain is Protoheme IX farnesyltransferase (287 aa).

8 helical membrane passes run 9–29 (IVTM…SATL), 31–51 (LIDW…AGAA), 94–114 (IILW…TWLI), 132–152 (VGAI…GGTL), 158–178 (WMLF…IAWL), 202–222 (AWQS…LAWF), 228–248 (VASA…WPLL), and 267–287 (LRWS…RASL).

Belongs to the UbiA prenyltransferase family. Protoheme IX farnesyltransferase subfamily.

It is found in the cell inner membrane. The catalysed reaction is heme b + (2E,6E)-farnesyl diphosphate + H2O = Fe(II)-heme o + diphosphate. It functions in the pathway porphyrin-containing compound metabolism; heme O biosynthesis; heme O from protoheme: step 1/1. Functionally, converts heme B (protoheme IX) to heme O by substitution of the vinyl group on carbon 2 of heme B porphyrin ring with a hydroxyethyl farnesyl side group. The chain is Protoheme IX farnesyltransferase from Rhodopirellula baltica (strain DSM 10527 / NCIMB 13988 / SH1).